A 261-amino-acid chain; its full sequence is Precorrin-6A synthase [deacetylating] (261 aa).

The catalysed reaction is precorrin-5 + S-adenosyl-L-methionine + H2O = precorrin-6A + acetate + S-adenosyl-L-homocysteine + 2 H(+). Its pathway is cofactor biosynthesis; adenosylcobalamin biosynthesis; cob(II)yrinate a,c-diamide from precorrin-2 (aerobic route): step 5/10. Its function is as follows. Catalyzes the methylation of C-1 in precorrin-5 and the subsequent extrusion of acetic acid from the resulting intermediate to form cobalt-precorrin-6A. The protein is Precorrin-6A synthase [deacetylating] (cobF) of Sinorhizobium sp.